Reading from the N-terminus, the 338-residue chain is D-erythrose-4-phosphate dehydrogenase (338 aa).

11–12 (RI) contacts NAD(+). Residues 153–155 (SCT), R199, 212–213 (TK), and R235 contribute to the substrate site. The active-site Nucleophile is C154. N317 provides a ligand contact to NAD(+).

The protein belongs to the glyceraldehyde-3-phosphate dehydrogenase family. Epd subfamily. Homotetramer.

The protein resides in the cytoplasm. The catalysed reaction is D-erythrose 4-phosphate + NAD(+) + H2O = 4-phospho-D-erythronate + NADH + 2 H(+). It functions in the pathway cofactor biosynthesis; pyridoxine 5'-phosphate biosynthesis; pyridoxine 5'-phosphate from D-erythrose 4-phosphate: step 1/5. Functionally, catalyzes the NAD-dependent conversion of D-erythrose 4-phosphate to 4-phosphoerythronate. The polypeptide is D-erythrose-4-phosphate dehydrogenase (Shewanella putrefaciens (strain CN-32 / ATCC BAA-453)).